Here is a 366-residue protein sequence, read N- to C-terminus: S-adenosylmethionine decarboxylase proenzyme 1 (366 aa).

Active-site residues include Glu9 and Glu12. Residue Glu68 coordinates substrate. Ser69 (schiff-base intermediate with substrate; via pyruvic acid) is an active-site residue. The residue at position 69 (Ser69) is a Pyruvic acid (Ser); by autocatalysis. Catalysis depends on Cys83, which acts as the Proton donor; for catalytic activity. Residues Ser233 and His246 each act as proton acceptor; for processing activity in the active site. Glu250 contributes to the substrate binding site.

This sequence belongs to the eukaryotic AdoMetDC family. Pyruvate serves as cofactor. Post-translationally, is synthesized initially as an inactive proenzyme. Formation of the active enzyme involves a self-maturation process in which the active site pyruvoyl group is generated from an internal serine residue via an autocatalytic post-translational modification. Two non-identical subunits are generated from the proenzyme in this reaction, and the pyruvate is formed at the N-terminus of the alpha chain, which is derived from the carboxyl end of the proenzyme. The post-translation cleavage follows an unusual pathway, termed non-hydrolytic serinolysis, in which the side chain hydroxyl group of the serine supplies its oxygen atom to form the C-terminus of the beta chain, while the remainder of the serine residue undergoes an oxidative deamination to produce ammonia and the pyruvoyl group blocking the N-terminus of the alpha chain.

The enzyme catalyses S-adenosyl-L-methionine + H(+) = S-adenosyl 3-(methylsulfanyl)propylamine + CO2. It functions in the pathway amine and polyamine biosynthesis; S-adenosylmethioninamine biosynthesis; S-adenosylmethioninamine from S-adenosyl-L-methionine: step 1/1. Its function is as follows. Essential for biosynthesis of the polyamines spermidine and spermine. Essential for polyamine homeostasis, and normal plant embryogenesis, growth and development. In Arabidopsis thaliana (Mouse-ear cress), this protein is S-adenosylmethionine decarboxylase proenzyme 1.